The primary structure comprises 185 residues: Der GTPase-activating protein YihI (185 aa).

2 disordered regions span residues 1–74 and 145–169; these read MGRS…KKKI and EPED…SSDE. Residues 23–33 are compositionally biased toward basic and acidic residues; the sequence is NRSESDVEGRE. Over residues 34–47 the composition is skewed to basic residues; sequence RKRVKKRKGLKSGS. The segment covering 48–68 has biased composition (basic and acidic residues); it reads RHSDGSEAKQRKAALARDPRL. Residues 145–155 are compositionally biased toward acidic residues; sequence EPEDDEEEIFE.

Belongs to the YihI family. In terms of assembly, interacts with Der.

A GTPase-activating protein (GAP) that modifies Der/EngA GTPase function. May play a role in ribosome biogenesis. This Vibrio atlanticus (strain LGP32) (Vibrio splendidus (strain Mel32)) protein is Der GTPase-activating protein YihI.